The primary structure comprises 180 residues: Pro-glucagon (180 aa).

The first 20 residues, 1–20 (MKSIYFVAGLFVMLVQGSWQ), serve as a signal peptide directing secretion. Positions 23-56 (LQDTEEKPRSFSTSQTDLLDDPDQMNEDKRHSQG) are disordered. Ser54 carries the phosphoserine modification. The propeptide occupies 84–89 (NRNEIA). Residues Ser105 and Ser108 each carry the phosphoserine modification. At Arg127 the chain carries Arginine amide. Positions 131-145 (DFPEEVTIVEELRRR) are excised as a propeptide. Ser150 and Ser152 each carry phosphoserine.

It belongs to the glucagon family. Proglucagon is post-translationally processed in a tissue-specific manner in pancreatic A cells and intestinal L cells. In pancreatic A cells, the major bioactive hormone is glucagon cleaved by PCSK2/PC2. In the intestinal L cells PCSK1/PC1 liberates GLP-1, GLP-2, glicentin and oxyntomodulin. GLP-1 is further N-terminally truncated by post-translational processing in the intestinal L cells resulting in GLP-1(7-37) GLP-1-(7-36)amide. The C-terminal amidation is neither important for the metabolism of GLP-1 nor for its effects on the endocrine pancreas. In terms of tissue distribution, glucagon is secreted in the A cells of the islets of Langerhans. GLP-1, GLP-2, oxyntomodulin and glicentin are secreted from enteroendocrine cells throughout the gastrointestinal tract. GLP-1 and GLP-2 are also secreted in selected neurons in the brain.

It is found in the secreted. In terms of biological role, plays a key role in glucose metabolism and homeostasis. Regulates blood glucose by increasing gluconeogenesis and decreasing glycolysis. A counterregulatory hormone of insulin, raises plasma glucose levels in response to insulin-induced hypoglycemia. Plays an important role in initiating and maintaining hyperglycemic conditions in diabetes. Its function is as follows. Potent stimulator of glucose-dependent insulin release. Also stimulates insulin release in response to IL6. Plays important roles on gastric motility and the suppression of plasma glucagon levels. May be involved in the suppression of satiety and stimulation of glucose disposal in peripheral tissues, independent of the actions of insulin. Has growth-promoting activities on intestinal epithelium. May also regulate the hypothalamic pituitary axis (HPA) via effects on LH, TSH, CRH, oxytocin, and vasopressin secretion. Increases islet mass through stimulation of islet neogenesis and pancreatic beta cell proliferation. Inhibits beta cell apoptosis. Functionally, stimulates intestinal growth and up-regulates villus height in the small intestine, concomitant with increased crypt cell proliferation and decreased enterocyte apoptosis. The gastrointestinal tract, from the stomach to the colon is the principal target for GLP-2 action. Plays a key role in nutrient homeostasis, enhancing nutrient assimilation through enhanced gastrointestinal function, as well as increasing nutrient disposal. Stimulates intestinal glucose transport and decreases mucosal permeability. Significantly reduces food intake. Inhibits gastric emptying in humans. Suppression of gastric emptying may lead to increased gastric distension, which may contribute to satiety by causing a sensation of fullness. In terms of biological role, may modulate gastric acid secretion and the gastro-pyloro-duodenal activity. May play an important role in intestinal mucosal growth in the early period of life. This Octodon degus (Degu) protein is Pro-glucagon (GCG).